Reading from the N-terminus, the 311-residue chain is Ribosomal RNA small subunit methyltransferase H (311 aa).

Residues 32-34 (GGH), Asp-52, Phe-78, Asp-99, and Gln-106 contribute to the S-adenosyl-L-methionine site.

It belongs to the methyltransferase superfamily. RsmH family.

It localises to the cytoplasm. It catalyses the reaction cytidine(1402) in 16S rRNA + S-adenosyl-L-methionine = N(4)-methylcytidine(1402) in 16S rRNA + S-adenosyl-L-homocysteine + H(+). Its function is as follows. Specifically methylates the N4 position of cytidine in position 1402 (C1402) of 16S rRNA. This is Ribosomal RNA small subunit methyltransferase H from Halothermothrix orenii (strain H 168 / OCM 544 / DSM 9562).